The following is an 80-amino-acid chain: SPI-1 type 3 secretion system needle filament protein (80 aa).

It belongs to the SctF family. The core secretion machinery of the T3SS is composed of approximately 20 different proteins, including cytoplasmic components, a base, an export apparatus and a needle. This subunit polymerizes and forms the helical needle filament. Interacts with the needle tip protein SipD/SctA. Interacts with the needle adapter protein PrgJ/SctI, the secretin InvG/SctC and the minor export apparatus protein SpaP/SctR. In vitro, the needle protomer refolds spontaneously to extend the needle from the distal end.

It is found in the secreted. The protein resides in the cell surface. With respect to regulation, binding of bile salts, including deoxycholate, to the PrgI:SipD interface may inhibit the T3SS function. Its function is as follows. Component of the type III secretion system (T3SS), also called injectisome, which is used to inject bacterial effector proteins into eukaryotic host cells. PrgI/SctF1 forms the external needle filament that protrudes from the bacterial surface. Is probably involved in the transduction of an activating signal, thought to be mediated by the distal tip of the needle filament, to the secretion machine. Required for invasion of epithelial cells. Required for the secretion of the effector protein SptP. In terms of biological role, during infection, can induce innate immune responses. The needle proteins interact with host TLR2 or TLR4, and induce signaling by NF-kappa-B and/or AP-1. This activation is MyD88 dependent and results in increased expression of cytokines, including TNF-alpha, IL-6 and IL-8. This chain is SPI-1 type 3 secretion system needle filament protein, found in Salmonella typhimurium (strain LT2 / SGSC1412 / ATCC 700720).